The primary structure comprises 323 residues: tRNA dimethylallyltransferase (323 aa).

Residue 12–19 coordinates ATP; that stretch reads GPTAAGKT. Position 14–19 (14–19) interacts with substrate; it reads TAAGKT. Interaction with substrate tRNA stretches follow at residues 37–40 and 161–165; these read DSAL and QRLIR.

It belongs to the IPP transferase family. In terms of assembly, monomer. It depends on Mg(2+) as a cofactor.

It carries out the reaction adenosine(37) in tRNA + dimethylallyl diphosphate = N(6)-dimethylallyladenosine(37) in tRNA + diphosphate. Its function is as follows. Catalyzes the transfer of a dimethylallyl group onto the adenine at position 37 in tRNAs that read codons beginning with uridine, leading to the formation of N6-(dimethylallyl)adenosine (i(6)A). The protein is tRNA dimethylallyltransferase of Pseudomonas putida (strain W619).